Consider the following 700-residue polypeptide: Phenoloxidase 8 (700 aa).

Positions 1–51 (MATLTQKFHGLLQHPLEPLFLPKNDGTLFYDLPERFLTSRYSPIGQNLANR) are excised as a propeptide. Residues Asn64 and Asn198 are each glycosylated (N-linked (GlcNAc...) asparagine). Residues His223, His227, and His252 each contribute to the Cu cation site. Asn295 carries an N-linked (GlcNAc...) asparagine glycan. Glu364 functions as the Proton acceptor in the catalytic mechanism. 3 residues coordinate Cu cation: His379, His383, and His419. 3 N-linked (GlcNAc...) asparagine glycosylation sites follow: Asn445, Asn507, and Asn565. Intrachain disulfides connect Cys592/Cys636 and Cys594/Cys643.

It belongs to the tyrosinase family. Homodimer. The cofactor is Cu(2+). Upon activation, a trypsin type protease cleaves prophenol oxidase to yield the active enzyme.

It localises to the secreted. It catalyses the reaction 2 tyramine + O2 = 2 dopamine. It carries out the reaction 2 dopamine + O2 = 2 dopamine quinone + 2 H2O. In terms of biological role, this is a copper-containing oxidase that functions in the formation of pigments such as melanins and other polyphenolic compounds. Catalyzes the oxidation of o-diphenols such as dopamine. Also oxidizes monophenols such as tyramine. The sequence is that of Phenoloxidase 8 from Anopheles gambiae (African malaria mosquito).